A 356-amino-acid polypeptide reads, in one-letter code: 1-deoxy-D-xylulose 5-phosphate reductoisomerase (356 aa).

NADPH contacts are provided by Thr-7, Gly-8, Ser-9, Ile-10, Gly-31, Asn-33, and Asn-111. Lys-112 is a 1-deoxy-D-xylulose 5-phosphate binding site. Glu-113 is a binding site for NADPH. Asp-131 contacts Mn(2+). Residues Ser-132, Glu-133, Ser-155, and His-178 each contribute to the 1-deoxy-D-xylulose 5-phosphate site. Glu-133 provides a ligand contact to Mn(2+). Gly-184 is a binding site for NADPH. 1-deoxy-D-xylulose 5-phosphate contacts are provided by Ser-191, Asn-196, Lys-197, and Glu-200. Glu-200 serves as a coordination point for Mn(2+).

It belongs to the DXR family. It depends on Mg(2+) as a cofactor. Requires Mn(2+) as cofactor.

The catalysed reaction is 2-C-methyl-D-erythritol 4-phosphate + NADP(+) = 1-deoxy-D-xylulose 5-phosphate + NADPH + H(+). The protein operates within isoprenoid biosynthesis; isopentenyl diphosphate biosynthesis via DXP pathway; isopentenyl diphosphate from 1-deoxy-D-xylulose 5-phosphate: step 1/6. Its function is as follows. Catalyzes the NADPH-dependent rearrangement and reduction of 1-deoxy-D-xylulose-5-phosphate (DXP) to 2-C-methyl-D-erythritol 4-phosphate (MEP). This Campylobacter jejuni subsp. jejuni serotype O:6 (strain 81116 / NCTC 11828) protein is 1-deoxy-D-xylulose 5-phosphate reductoisomerase.